A 69-amino-acid chain; its full sequence is Large ribosomal subunit protein bL31 (69 aa).

Zn(2+)-binding residues include cysteine 16, cysteine 18, cysteine 38, and cysteine 41.

The protein belongs to the bacterial ribosomal protein bL31 family. Type A subfamily. In terms of assembly, part of the 50S ribosomal subunit. The cofactor is Zn(2+).

Binds the 23S rRNA. The polypeptide is Large ribosomal subunit protein bL31 (Thermobifida fusca (strain YX)).